The chain runs to 689 residues: Protein SDA1 homolog (689 aa).

A coiled-coil region spans residues 254 to 319 (KKNTKNKKKL…RFEVKLMHMD (66 aa)). 2 disordered regions span residues 485–512 (EQEKTEEPEEDDGWESASLSDDDEDGEW) and 606–689 (KPKS…RLMK). Residues 668–681 (SFRDKQIALRDSLL) are compositionally biased toward basic and acidic residues.

It belongs to the SDA1 family.

It is found in the nucleus. The protein resides in the nucleolus. Its function is as follows. Required for 60S pre-ribosomal subunits export to the cytoplasm. The sequence is that of Protein SDA1 homolog (sdad1) from Xenopus tropicalis (Western clawed frog).